The following is a 630-amino-acid chain: WD repeat-containing protein 26 homolog (630 aa).

Residues 1 to 13 (MQSTSSTSSGSCS) are compositionally biased toward low complexity. The interval 1 to 90 (MQSTSSTSSG…NNRENTSCSG (90 aa)) is disordered. Residues S36 and S40 each carry the phosphoserine modification. Composition is skewed to polar residues over residues 48–57 (PSGSSAATNG) and 66–75 (IVNNNGSSSR). In terms of domain architecture, LisH spans 96–128 (SNQEIIRLIGQYLHDVGLDKSVQTLMLESGCYL). The CTLH domain occupies 129–190 (EHPSATKFRE…EHLDDGNPLD (62 aa)). WD repeat units follow at residues 312 to 351 (DHCDEVWFCKFSPDGLKLATGSKDSTVIIWDVDPYKLTLK), 359 to 400 (QAQL…LVVK), 404 to 443 (SLEDSLACGAFSRDGARFVCGGQKGQLYLCDLNGTIVDSW), 445 to 482 (GVRVNSIAFRADNKTILAADNHYRIRGYNFDSPRSDFD), 485 to 524 (REPHPIMTFSINSADRLALLNVSNQGLHLWDIEDKCLVRR), 529 to 569 (RQSN…PLAK), and 572 to 612 (GHTK…SSAT). Residues 604-630 (PKPNGSSATTESDDCSSSSSSSSWNMT) form a disordered region. Low complexity predominate over residues 609–630 (SSATTESDDCSSSSSSSSWNMT).

It is found in the cytoplasm. The protein resides in the mitochondrion. G-beta-like protein involved in cell signal transduction. This is WD repeat-containing protein 26 homolog from Drosophila melanogaster (Fruit fly).